Consider the following 297-residue polypeptide: Vesicular-fusion protein SEC17 (297 aa).

Belongs to the SNAP family.

The protein localises to the membrane. In terms of biological role, required for vesicular transport between the endoplasmic reticulum and the Golgi apparatus. This Komagataella phaffii (strain GS115 / ATCC 20864) (Yeast) protein is Vesicular-fusion protein SEC17 (SEC17).